The primary structure comprises 120 residues: uncharacterized protein (120 aa).

Residues 13-119 enclose the PRD domain; it reads VIDKDICKGM…YGLWMAANEE (107 aa).

This is an uncharacterized protein from Escherichia coli (strain K12).